The sequence spans 253 residues: Complement C1q subcomponent subunit B (253 aa).

An N-terminal signal peptide occupies residues 1 to 25 (MKTQWGEVWTHLLLLLLGFLHVSWA). Gln-26 carries the pyrrolidone carboxylic acid modification. The Collagen-like domain occupies 29 to 112 (CTGPPGIPGI…GPRGPKGDSG (84 aa)). 5 positions are modified to 4-hydroxyproline: Pro-33, Pro-36, Pro-39, Pro-51, and Pro-54. The segment at 35–115 (IPGIPGVPGV…GPKGDSGDYG (81 aa)) is disordered. 5-hydroxylysine occurs at positions 57 and 60. Position 63 is a 4-hydroxyproline (Pro-63). 5-hydroxylysine is present on Lys-75. The span at 78–96 (PGIPGTPGKVGPKGPVGPK) shows a compositional bias: low complexity. 4-hydroxyproline is present on residues Pro-81 and Pro-84. Residues Lys-90 and Lys-96 each carry the 5-hydroxylysine modification. Position 99 is a 4-hydroxyproline (Pro-99). At Lys-108 the chain carries 5-hydroxylysine. One can recognise a C1q domain in the interval 115-253 (GATQKVAFSA…GFLLFPDMDA (139 aa)). Residues Cys-179 and Cys-198 are joined by a disulfide bond. Ca(2+) contacts are provided by Asp-199, Tyr-200, and Gln-206.

Core component of the complement C1 complex, a calcium-dependent complex composed of 1 molecule of the C1Q subcomplex, 2 molecules of C1R and 2 molecules of C1S. The C1Q subcomplex is composed 18 subunits: 3 chains of C1QA, C1QB, and C1QC trimerize to form 6 collagen-like triple helices connected to six globular ligand-recognition modules (C1q domain). Post-translationally, hydroxylated on lysine and proline residues. Hydroxylated lysine residues can be glycosylated. Mouse C1Q contains up to 64.0 hydroxylysine-galactosylglucose residues. Total percentage hydroxylysine residues glycosylated is 95.1%. Contains no hydroxylysine-monosaccharides. In terms of tissue distribution, highest expression in thioglycolate-activated peritoneal macrophages. Also found in spleen, thymus and heart. Very weak expression liver, kidney, lung and intestine.

The protein localises to the secreted. It is found in the cell surface. The C1Q subcomplex is inhibited by sulfated molecules, such as triterpenoid sulfates, heparan sulfate, or chondroitin sulfates. In terms of biological role, core component of the complement C1 complex, a multiprotein complex that initiates the classical pathway of the complement system, a cascade of proteins that leads to phagocytosis and breakdown of pathogens and signaling that strengthens the adaptive immune system. The classical complement pathway is initiated by the C1Q subcomplex of the C1 complex, which specifically binds IgG or IgM immunoglobulins complexed with antigens, forming antigen-antibody complexes on the surface of pathogens: C1QA, together with C1QB and C1QC, specifically recognizes and binds the Fc regions of IgG or IgM via its C1q domain. Immunoglobulin-binding activates the proenzyme C1R, which cleaves C1S, initiating the proteolytic cascade of the complement system. The C1Q subcomplex is activated by a hexamer of IgG complexed with antigens, while it is activated by a pentameric IgM. The C1Q subcomplex also recognizes and binds phosphatidylserine exposed on the surface of cells undergoing programmed cell death, possibly promoting activation of the complement system. The polypeptide is Complement C1q subcomponent subunit B (Mus musculus (Mouse)).